The sequence spans 494 residues: Metal cation symporter ZIP14 (494 aa).

Residues 1–34 form the signal peptide; sequence MTLRRASGCRQLTLTIGLALTLGLLQWPIGDVRG. Residues 35–152 lie on the Extracellular side of the membrane; sequence QDGASPAQVL…PTEAEVWGYG (118 aa). A helical membrane pass occupies residues 153–173; the sequence is LLCVTVISLCSLVGASVVPFM. At 174–181 the chain is on the cytoplasmic side; sequence RKTFYKRL. A helical transmembrane segment spans residues 182–202; that stretch reads LLYFIALAIGTLYSNALFQLI. Residues 203-219 are Extracellular-facing; it reads PEAFGFDPMEDYYVPKS. The chain crosses the membrane as a helical span at residues 220-240; sequence AVVFGGFYLFFFTEKILKMIL. Topologically, residues 241–397 are cytoplasmic; it reads KPKDTGGHGH…LLNAGMSIQQ (157 aa). The HHHGHXHX-motif signature appears at 248–255; sequence HGHGHSHF. Residues 376–381 carry the XEXPHE-motif motif; it reads EEFPHE. The helical transmembrane segment at 398-418 threads the bilayer; that stretch reads ALFFNFLSACCCYLGMGFGIL. The Extracellular segment spans residues 419 to 426; it reads AGNNFSPN. The chain crosses the membrane as a helical span at residues 427 to 447; sequence WIFALAGGMFLYIALADMFPE. At 448 to 462 the chain is on the cytoplasmic side; it reads MNEVSREEEEAGGSG. Residues 463-483 form a helical membrane-spanning segment; sequence FLLTFALQNAGLLTGFAIMLV. Topologically, residues 484-494 are extracellular; it reads LTIYSGQIQLG.

This sequence belongs to the ZIP transporter (TC 2.A.5) family. As to quaternary structure, homotrimer.

It is found in the cell membrane. Its subcellular location is the apical cell membrane. The protein resides in the basolateral cell membrane. It localises to the early endosome membrane. The protein localises to the late endosome membrane. It is found in the lysosome membrane. The enzyme catalyses Zn(2+)(out) + 2 hydrogencarbonate(out) = Zn(2+)(in) + 2 hydrogencarbonate(in). It carries out the reaction Mn(2+)(out) + 2 hydrogencarbonate(out) = Mn(2+)(in) + 2 hydrogencarbonate(in). The catalysed reaction is Fe(2+)(out) + 2 hydrogencarbonate(out) = Fe(2+)(in) + 2 hydrogencarbonate(in). It catalyses the reaction Cd(2+)(out) + 2 hydrogencarbonate(out) = Cd(2+)(in) + 2 hydrogencarbonate(in). Broad-scope metal ion transporter with a preference for zinc uptake. Also mediates cellular uptake of nontransferrin-bound iron. In terms of biological role, electroneutral transporter of the plasma membrane mediating the cellular uptake of the divalent metal cations zinc, manganese and iron that are important for tissue homeostasis, metabolism, development and immunity. Functions as an energy-dependent symporter, transporting through the membranes an electroneutral complex composed of a divalent metal cation and two bicarbonate anions. Beside these endogenous cellular substrates, can also import cadmium a non-essential metal which is cytotoxic and carcinogenic. In Danio rerio (Zebrafish), this protein is Metal cation symporter ZIP14.